The following is a 671-amino-acid chain: Probable potassium transport system protein Kup 2 (671 aa).

Transmembrane regions (helical) follow at residues 18 to 38, 60 to 80, 103 to 123, 149 to 169, 173 to 193, 218 to 238, 252 to 272, 292 to 312, 343 to 363, 373 to 393, 402 to 422, and 424 to 444; these read GFLI…LYAM, VSLV…LIAL, WLIV…ALTP, VTTL…ASLV, FGPI…INSF, AGFF…ALYS, WPFV…WLLA, MVIY…QALI, LYIP…VLYF, YSLA…YFLI, IAFI…ASLV, and FING…VMFI.

It belongs to the HAK/KUP transporter (TC 2.A.72) family.

Its subcellular location is the cell membrane. It catalyses the reaction K(+)(in) + H(+)(in) = K(+)(out) + H(+)(out). Its function is as follows. Transport of potassium into the cell. Likely operates as a K(+):H(+) symporter. The chain is Probable potassium transport system protein Kup 2 from Lactococcus lactis subsp. cremoris (strain SK11).